The chain runs to 285 residues: MMQTKKPDWLRIRIKANQSVEEVIKLLKDLSLHTVCQEAQCPNIFECFSKKTATFLILGDVCTRNCTFCDVKKGKPQEVDKNEPKKIAEAVKVLNLSYVVVTSVTRDDLEDGGAEHFANVIEKIKELNPQTKVEVLIPDFNGDEKAIYKVVSARPDVLSHNVETVPRLYPTVRSKADYERSLSVLKVAKKMDNRIYTKSGLMVGLGETKEEVKEVLKNLRSVGCDFVTIGQYLSPSKQHYPVIEYIHPNVFEEYKEYAISIGFKHVMSAPLVRSSYLAEETTKII.

Residues Cys-36, Cys-41, Cys-47, Cys-62, Cys-66, Cys-69, and Ser-275 each coordinate [4Fe-4S] cluster. Residues 48-264 (FSKKTATFLI…KEYAISIGFK (217 aa)) enclose the Radical SAM core domain.

This sequence belongs to the radical SAM superfamily. Lipoyl synthase family. Requires [4Fe-4S] cluster as cofactor.

Its subcellular location is the cytoplasm. The catalysed reaction is [[Fe-S] cluster scaffold protein carrying a second [4Fe-4S](2+) cluster] + N(6)-octanoyl-L-lysyl-[protein] + 2 oxidized [2Fe-2S]-[ferredoxin] + 2 S-adenosyl-L-methionine + 4 H(+) = [[Fe-S] cluster scaffold protein] + N(6)-[(R)-dihydrolipoyl]-L-lysyl-[protein] + 4 Fe(3+) + 2 hydrogen sulfide + 2 5'-deoxyadenosine + 2 L-methionine + 2 reduced [2Fe-2S]-[ferredoxin]. The protein operates within protein modification; protein lipoylation via endogenous pathway; protein N(6)-(lipoyl)lysine from octanoyl-[acyl-carrier-protein]: step 2/2. In terms of biological role, catalyzes the radical-mediated insertion of two sulfur atoms into the C-6 and C-8 positions of the octanoyl moiety bound to the lipoyl domains of lipoate-dependent enzymes, thereby converting the octanoylated domains into lipoylated derivatives. The chain is Lipoyl synthase from Caldicellulosiruptor saccharolyticus (strain ATCC 43494 / DSM 8903 / Tp8T 6331).